We begin with the raw amino-acid sequence, 244 residues long: METKPVITCLKTLLIIYSFVFWITGVILLAVGVWGKLTLGTYISLIAENSTNAPYVLIGTGTTIVVFGLFGCFATCRGSPWMLKLYAMFLSLVFLAELVAGISGFVFRHEIKDTFLRTYTDAMQTYNGNDERSRAVDHVQRSLSCCGVQNYTNWSTSPYFLEHGIPPSCCMNETDCNPQDLHNLTVAATKVNQKGCYDLVTSFMETNMGIIAGVAFGIAFSQLIGMLLACCLSRFITANQYEMV.

The Cytoplasmic portion of the chain corresponds to 1 to 11 (METKPVITCLK). A helical membrane pass occupies residues 12–35 (TLLIIYSFVFWITGVILLAVGVWG). Over 36–51 (KLTLGTYISLIAENST) the chain is Extracellular. An N-linked (GlcNAc...) asparagine glycan is attached at Asn49. A helical membrane pass occupies residues 52–70 (NAPYVLIGTGTTIVVFGLF). Over 71-81 (GCFATCRGSPW) the chain is Cytoplasmic. Residues 82 to 107 (MLKLYAMFLSLVFLAELVAGISGFVF) traverse the membrane as a helical segment. Over 108 to 208 (RHEIKDTFLR…LVTSFMETNM (101 aa)) the chain is Extracellular. N-linked (GlcNAc...) asparagine glycosylation is found at Asn150, Asn153, Asn172, and Asn183. A helical transmembrane segment spans residues 209–229 (GIIAGVAFGIAFSQLIGMLLA). Over 230 to 244 (CCLSRFITANQYEMV) the chain is Cytoplasmic.

It belongs to the tetraspanin (TM4SF) family.

It localises to the membrane. May be involved in cell proliferation and cell motility. This Pan troglodytes (Chimpanzee) protein is Tetraspanin-7 (TSPAN7).